The chain runs to 280 residues: Eukaryotic translation initiation factor 3 subunit F-1 (280 aa).

The 131-residue stretch at 8–138 (VRVHPVVLFQ…LRAYVCIQLG (131 aa)) folds into the MPN domain.

Belongs to the eIF-3 subunit F family. As to quaternary structure, component of the eukaryotic translation initiation factor 3 (eIF-3) complex. The eIF-3 complex interacts with pix.

Its subcellular location is the cytoplasm. Component of the eukaryotic translation initiation factor 3 (eIF-3) complex, which is involved in protein synthesis of a specialized repertoire of mRNAs and, together with other initiation factors, stimulates binding of mRNA and methionyl-tRNAi to the 40S ribosome. The eIF-3 complex specifically targets and initiates translation of a subset of mRNAs involved in cell proliferation. The chain is Eukaryotic translation initiation factor 3 subunit F-1 from Drosophila virilis (Fruit fly).